Consider the following 138-residue polypeptide: Small ribosomal subunit protein uS11c (138 aa).

The tract at residues 1–22 (MAKLLPRIGSRKNGRISSRKNA) is disordered. The span at 9–22 (GSRKNGRISSRKNA) shows a compositional bias: basic residues.

This sequence belongs to the universal ribosomal protein uS11 family. In terms of assembly, part of the 30S ribosomal subunit.

It localises to the plastid. It is found in the chloroplast. This is Small ribosomal subunit protein uS11c from Populus alba (White poplar).